The primary structure comprises 112 residues: UPF0145 protein LAF_1635 (112 aa).

This sequence belongs to the UPF0145 family.

The protein is UPF0145 protein LAF_1635 of Limosilactobacillus fermentum (strain NBRC 3956 / LMG 18251) (Lactobacillus fermentum).